The chain runs to 176 residues: Large ribosomal subunit protein uL6 (176 aa).

This sequence belongs to the universal ribosomal protein uL6 family. Part of the 50S ribosomal subunit.

In terms of biological role, this protein binds to the 23S rRNA, and is important in its secondary structure. It is located near the subunit interface in the base of the L7/L12 stalk, and near the tRNA binding site of the peptidyltransferase center. This Dechloromonas aromatica (strain RCB) protein is Large ribosomal subunit protein uL6.